Reading from the N-terminus, the 251-residue chain is Triosephosphate isomerase (251 aa).

10 to 12 (NWK) provides a ligand contact to substrate. Catalysis depends on His-98, which acts as the Electrophile. The active-site Proton acceptor is Glu-169. Substrate is bound by residues Gly-175, Ser-213, and 234-235 (GG).

It belongs to the triosephosphate isomerase family. In terms of assembly, homodimer.

It localises to the cytoplasm. It carries out the reaction D-glyceraldehyde 3-phosphate = dihydroxyacetone phosphate. The protein operates within carbohydrate biosynthesis; gluconeogenesis. Its pathway is carbohydrate degradation; glycolysis; D-glyceraldehyde 3-phosphate from glycerone phosphate: step 1/1. Its function is as follows. Involved in the gluconeogenesis. Catalyzes stereospecifically the conversion of dihydroxyacetone phosphate (DHAP) to D-glyceraldehyde-3-phosphate (G3P). The polypeptide is Triosephosphate isomerase (Paracidovorax citrulli (strain AAC00-1) (Acidovorax citrulli)).